Consider the following 378-residue polypeptide: UPF0754 membrane protein SH1116 (378 aa).

2 consecutive transmembrane segments (helical) span residues 4–24 (FLVILFMVVVGAVIGGVTNVI) and 358–378 (SLGFILGGIIGFFQGIVAIFV).

Belongs to the UPF0754 family.

It localises to the cell membrane. The polypeptide is UPF0754 membrane protein SH1116 (Staphylococcus haemolyticus (strain JCSC1435)).